The sequence spans 895 residues: Alanine--tRNA ligase (895 aa).

Residues H586, H590, C690, and H694 each contribute to the Zn(2+) site.

This sequence belongs to the class-II aminoacyl-tRNA synthetase family. The cofactor is Zn(2+).

It localises to the cytoplasm. The enzyme catalyses tRNA(Ala) + L-alanine + ATP = L-alanyl-tRNA(Ala) + AMP + diphosphate. Functionally, catalyzes the attachment of alanine to tRNA(Ala) in a two-step reaction: alanine is first activated by ATP to form Ala-AMP and then transferred to the acceptor end of tRNA(Ala). Also edits incorrectly charged Ser-tRNA(Ala) and Gly-tRNA(Ala) via its editing domain. The sequence is that of Alanine--tRNA ligase from Korarchaeum cryptofilum (strain OPF8).